The chain runs to 375 residues: Chaperone protein DnaJ (375 aa).

The 66-residue stretch at 5–70 (DYYEVLGVER…GKRMAYDQYG (66 aa)) folds into the J domain. The segment at 134–212 (GTTVTIRVPT…CHGQGRVEEH (79 aa)) adopts a CR-type zinc-finger fold. Residues Cys147, Cys150, Cys164, Cys167, Cys186, Cys189, Cys200, and Cys203 each coordinate Zn(2+). CXXCXGXG motif repeat units follow at residues 147–154 (CKTCDGSG), 164–171 (CTTCGGIG), 186–193 (CPRCHGSG), and 200–207 (CPDCHGQG).

The protein belongs to the DnaJ family. Homodimer. Requires Zn(2+) as cofactor.

It localises to the cytoplasm. Functionally, participates actively in the response to hyperosmotic and heat shock by preventing the aggregation of stress-denatured proteins and by disaggregating proteins, also in an autonomous, DnaK-independent fashion. Unfolded proteins bind initially to DnaJ; upon interaction with the DnaJ-bound protein, DnaK hydrolyzes its bound ATP, resulting in the formation of a stable complex. GrpE releases ADP from DnaK; ATP binding to DnaK triggers the release of the substrate protein, thus completing the reaction cycle. Several rounds of ATP-dependent interactions between DnaJ, DnaK and GrpE are required for fully efficient folding. Also involved, together with DnaK and GrpE, in the DNA replication of plasmids through activation of initiation proteins. This Azotobacter vinelandii (strain DJ / ATCC BAA-1303) protein is Chaperone protein DnaJ.